The following is a 364-amino-acid chain: MKYLFAGGGTGGHIYPAIAIAKEILKNEKNAQILFVGTKKGLENELVPREGFELKTITVQGFKRKLSLDTLKTIYKAMVGLKEANNILNEFKPDVVIGTGGYVCGPVLMMAALKGIPTLIHEQNAFPGLTNKVLSRFVKVVAVSFEESVKYFKNKEKVVVTGNPIRRELLKVTKEEGLKNLGFYSDKPLIVSVGGSRGAEKINFTMVEFLKQKDKNLQVLIITGANQYEKVLEKVKTETIDIDETVKIIPYCHNMQDVYAAADIIICRAGAITLAEITAKGVASILIPSPYVANNHQEYNARVLEKAGASYVILEKDLTAEKLYKKIKYLLDNPQVLSKMRDNAQKISKIDAAEKIYKLIKSIT.

UDP-N-acetyl-alpha-D-glucosamine is bound by residues 10–12 (TGG), asparagine 124, arginine 166, serine 196, and glutamine 297.

The protein belongs to the glycosyltransferase 28 family. MurG subfamily.

Its subcellular location is the cell membrane. It carries out the reaction di-trans,octa-cis-undecaprenyl diphospho-N-acetyl-alpha-D-muramoyl-L-alanyl-D-glutamyl-meso-2,6-diaminopimeloyl-D-alanyl-D-alanine + UDP-N-acetyl-alpha-D-glucosamine = di-trans,octa-cis-undecaprenyl diphospho-[N-acetyl-alpha-D-glucosaminyl-(1-&gt;4)]-N-acetyl-alpha-D-muramoyl-L-alanyl-D-glutamyl-meso-2,6-diaminopimeloyl-D-alanyl-D-alanine + UDP + H(+). The protein operates within cell wall biogenesis; peptidoglycan biosynthesis. Its function is as follows. Cell wall formation. Catalyzes the transfer of a GlcNAc subunit on undecaprenyl-pyrophosphoryl-MurNAc-pentapeptide (lipid intermediate I) to form undecaprenyl-pyrophosphoryl-MurNAc-(pentapeptide)GlcNAc (lipid intermediate II). The chain is UDP-N-acetylglucosamine--N-acetylmuramyl-(pentapeptide) pyrophosphoryl-undecaprenol N-acetylglucosamine transferase from Thermoanaerobacter pseudethanolicus (strain ATCC 33223 / 39E) (Clostridium thermohydrosulfuricum).